A 463-amino-acid polypeptide reads, in one-letter code: Retinoic acid receptor RXR-gamma (463 aa).

Residues 1 to 138 (MYGNYSHFMK…TSPGSLVKHI (138 aa)) are modulating. The tract at residues 18–53 (SPGHTGSTSMSPSAALSTGKPMDSHPSYTDTPVSAP) is disordered. A compositionally biased stretch (polar residues) spans 21–33 (HTGSTSMSPSAAL). The nuclear receptor DNA-binding region spans 136–211 (KHICAICGDR…MGMKREAVQE (76 aa)). NR C4-type zinc fingers lie at residues 139–159 (CAIC…CEGC) and 175–199 (CRDN…YQKC). Residues 205–230 (KREAVQEERQRSRERAESEAECATSG) are hinge. The NR LBD domain maps to 231–459 (HEDMPVERIL…TFLMEMLETP (229 aa)).

This sequence belongs to the nuclear hormone receptor family. NR2 subfamily. In terms of assembly, homodimer. Heterodimer with a RAR molecule. Binds DNA preferentially as a RAR/RXR heterodimer. Interacts with RARA. Acetylated by EP300. In terms of tissue distribution, expressed in aortic endothelial cells (at protein level).

It is found in the nucleus. The protein resides in the cytoplasm. Functionally, receptor for retinoic acid. Retinoic acid receptors bind as heterodimers to their target response elements in response to their ligands, all-trans or 9-cis retinoic acid, and regulate gene expression in various biological processes. The RAR/RXR heterodimers bind to the retinoic acid response elements (RARE) composed of tandem 5'-AGGTCA-3' sites known as DR1-DR5. The high affinity ligand for RXRs is 9-cis retinoic acid. This Homo sapiens (Human) protein is Retinoic acid receptor RXR-gamma (RXRG).